The following is a 296-amino-acid chain: MFS-type transporter pytF (296 aa).

The next 7 membrane-spanning stretches (helical) occupy residues tryptophan 30 to phenylalanine 50, tryptophan 72 to phenylalanine 92, lysine 98 to cysteine 118, phenylalanine 124 to isoleucine 144, leucine 157 to leucine 177, leucine 180 to leucine 200, and valine 238 to phenylalanine 258. A glycan (N-linked (GlcNAc...) asparagine) is linked at asparagine 265. A helical membrane pass occupies residues serine 271–alanine 291.

The protein belongs to the major facilitator superfamily. Monocarboxylate porter (TC 2.A.1.13) family.

The protein localises to the cell membrane. Its function is as follows. MFS-type transporter; part of the gene cluster that mediates the biosynthesis of pyranterreones, a family of antioxidative compounds. Directly involved in the secretion of pyranterreones. The sequence is that of MFS-type transporter pytF from Aspergillus terreus (strain NIH 2624 / FGSC A1156).